A 418-amino-acid chain; its full sequence is AP-3 complex subunit mu-1 (418 aa).

The MHD domain maps to 176 to 417; the sequence is NNEAYFDVVE…VTKAGKFQVR (242 aa).

This sequence belongs to the adaptor complexes medium subunit family. As to quaternary structure, adaptor protein complex 3 (AP-3) is a heterotetramer composed of two large adaptins (delta-type subunit AP3D1 and beta-type subunit AP3B1 or AP3B2), a medium adaptin (mu-type subunit AP3M1 or AP3M2) and a small adaptin (sigma-type subunit APS1 or AP3S2). Interacts with AGAP1. AP-3 associates with the BLOC-1 complex.

Its subcellular location is the golgi apparatus. The protein localises to the cytoplasmic vesicle membrane. In terms of biological role, part of the AP-3 complex, an adaptor-related complex which is not clathrin-associated. The complex is associated with the Golgi region as well as more peripheral structures. It facilitates the budding of vesicles from the Golgi membrane and may be directly involved in trafficking to lysosomes. In concert with the BLOC-1 complex, AP-3 is required to target cargos into vesicles assembled at cell bodies for delivery into neurites and nerve terminals. In Mus musculus (Mouse), this protein is AP-3 complex subunit mu-1 (Ap3m1).